A 74-amino-acid polypeptide reads, in one-letter code: Lantibiotic lichenicidin A1 (74 aa).

Positions 1–42 are excised as a propeptide; the sequence is MSKKEMILSWKNPMYRTESSYHPAGNILKELQEEEQHSIAGG. A 2-oxobutanoic acid modification is found at Thr43. Residues 45-49 constitute a cross-link (beta-methyllanthionine (Thr-Cys)); the sequence is TLSTC. Residue Ser47 is modified to 2,3-didehydroalanine (Ser). Position 48 is a (Z)-2,3-didehydrobutyrine (Thr48). Positions 53–63 form a cross-link, lanthionine (Ser-Cys); that stretch reads SKPLGNNGYLC. Cross-links (beta-methyllanthionine (Thr-Cys)) lie at residues 64 to 69 and 66 to 73; these read TVTKEC and TKECMPSC.

In terms of processing, maturation of lantibiotics involves the enzymatic conversion of Thr, and Ser into dehydrated AA and the formation of thioether bonds with cysteine. This is followed by membrane translocation and cleavage of the modified precursor.

The protein resides in the secreted. Its subcellular location is the cell wall. In terms of biological role, lanthionine-containing peptide antibiotic (lantibiotic) active on Gram-positive bacteria. The bactericidal activity of lantibiotics is based on depolarization of energized bacterial cytoplasmic membranes, initiated by the formation of aqueous transmembrane pores. When present individually, LchA1 exhibits activity towards L.lactis HP. When combined with LchA2, it displays activity towards a broad spectrum of non-pathogenic and pathogenic Gram-positive bacteria including strains of L.monocytogenes, methicillin-resistant S.aureus, S.pneumoniae and strains of vancomycin-resistant enterococci, but not towards E.faecium L4001 and BM4147-1. Combined LchA1 and LchA2 peptides also inhibit Bacillus sp. HIL-Y85/54728, L.lactis DPC3417 and B.halodurans C-125, which produce lantibiotics themselves. Inactivated by proteinase K and pronase E, but not by trypsin and chymotrypsin. The protein is Lantibiotic lichenicidin A1 of Bacillus licheniformis (strain ATCC 14580 / DSM 13 / JCM 2505 / CCUG 7422 / NBRC 12200 / NCIMB 9375 / NCTC 10341 / NRRL NRS-1264 / Gibson 46).